A 2763-amino-acid chain; its full sequence is Large tegument protein deneddylase (2763 aa).

Residues 1-247 (MDIIPPIAVT…CDTYFTDEQY (247 aa)) form a deubiquitination activity region. Positions 12–237 (AGVGSRNQFD…SSAVTLIYGS (226 aa)) constitute a Peptidase C76 domain. Catalysis depends on residues C32, D168, and H170. Positions 495-523 (LELFINLTILRLTGFVVENGTRTHHGATS) are interaction with inner tegument protein. Repeat copies occupy residues 2455–2457 (PVQ), 2458–2460 (PVQ), 2461–2463 (PAQ), 2464–2466 (PVQ), 2467–2469 (PAQ), 2470–2472 (PAQ), 2473–2475 (PVQ), and 2476–2478 (PAQ). Positions 2455-2478 (PVQPVQPAQPVQPAQPAQPVQPAQ) are 8 X 3 AA repeats of P-A/V-Q. The segment at 2630–2651 (NYKTRQPSPNFPRDVHTWGVSS) is disordered.

Belongs to the herpesviridae large tegument protein family. As to quaternary structure, interacts with host CUL1 and CUL4A; these interactions inhibit the E3 ligase activity of cullins. Interacts with inner tegument protein. Interacts with capsid vertex specific component CVC2. Interacts with the major capsid protein/MCP.

It localises to the virion tegument. The protein resides in the host cytoplasm. Its subcellular location is the host nucleus. The catalysed reaction is Thiol-dependent hydrolysis of ester, thioester, amide, peptide and isopeptide bonds formed by the C-terminal Gly of ubiquitin (a 76-residue protein attached to proteins as an intracellular targeting signal).. In terms of biological role, large tegument protein that plays multiple roles in the viral cycle. During viral entry, remains associated with the capsid while most of the tegument is detached and participates in the capsid transport toward the host nucleus. Plays a role in the routing of the capsid at the nuclear pore complex and subsequent uncoating. Within the host nucleus, acts as a deneddylase and promotes the degradation of nuclear CRLs (cullin-RING ubiquitin ligases) and thereby stabilizes nuclear CRL substrates, while cytoplasmic CRLs remain unaffected. These modifications prevent host cell cycle S-phase progression and create a favorable environment allowing efficient viral genome replication. Participates later in the secondary envelopment of capsids. Indeed, plays a linker role for the association of the outer viral tegument to the capsids together with the inner tegument protein. This Varicella-zoster virus (strain Oka vaccine) (HHV-3) protein is Large tegument protein deneddylase.